We begin with the raw amino-acid sequence, 542 residues long: Pre-mRNA-splicing factor 38B (542 aa).

The segment covering 1–12 (MANNSPALTGNS) has biased composition (polar residues). The interval 1-41 (MANNSPALTGNSQPQHQAAAAVTQQQQQCGGGGGATKPAVS) is disordered. An N-acetylalanine modification is found at Ala2. Ser5 is modified (phosphoserine). Low complexity predominate over residues 13-28 (QPQHQAAAAVTQQQQQ). Residue Lys228 is modified to N6-acetyllysine. The interval 233–542 (QIKTRPRKIK…KEHKSKDETV (310 aa)) is disordered. The segment covering 244–256 (DGKEGIEEIDRHV) has biased composition (basic and acidic residues). Over residues 257-285 (ERRRSRSPRRSLSPRRSPRRSRSRSHHRE) the composition is skewed to basic residues. Ser289, Ser291, Ser319, and Ser321 each carry phosphoserine. Over residues 292 to 328 (FDRELEREKERQRLEREAKEREKERRRSRSIDRGLDR) the composition is skewed to basic and acidic residues. Positions 293 to 322 (DRELEREKERQRLEREAKEREKERRRSRSI) form a coiled coil. Positions 329-345 (RRSRSRERHRSRSRSRD) are enriched in basic residues. Basic and acidic residues predominate over residues 346–419 (RKGDRRDRDR…DRRHRDDKKE (74 aa)). The span at 420–447 (SKKKHSRSRSRERKHRSRSRNAGKRSRS) shows a compositional bias: basic residues. The residue at position 445 (Ser445) is a Phosphoserine. Basic and acidic residues predominate over residues 448–465 (RSKDKSSRHKNESKEKAN). Phosphoserine occurs at positions 470, 472, and 478. Basic and acidic residues-rich tracts occupy residues 478 to 491 (SVEKRKREHSPSRE) and 498 to 520 (RSQDRSHKREHNDSKDQSDRQDH). A phosphoserine mark is found at Ser523, Ser525, and Ser530. Residues 530-542 (SQEKEHKSKDETV) are compositionally biased toward basic and acidic residues.

The protein belongs to the PRP38 family.

The protein localises to the nucleus. Its function is as follows. May be required for pre-mRNA splicing. This chain is Pre-mRNA-splicing factor 38B (Prpf38b), found in Mus musculus (Mouse).